The primary structure comprises 228 residues: 7-cyano-7-deazaguanine synthase (228 aa).

Residue Leu-13–Ser-23 coordinates ATP. Residues Cys-192, Cys-200, Cys-203, and Cys-206 each contribute to the Zn(2+) site.

Belongs to the QueC family. Requires Zn(2+) as cofactor.

The enzyme catalyses 7-carboxy-7-deazaguanine + NH4(+) + ATP = 7-cyano-7-deazaguanine + ADP + phosphate + H2O + H(+). Its pathway is purine metabolism; 7-cyano-7-deazaguanine biosynthesis. In terms of biological role, catalyzes the ATP-dependent conversion of 7-carboxy-7-deazaguanine (CDG) to 7-cyano-7-deazaguanine (preQ(0)). The protein is 7-cyano-7-deazaguanine synthase of Aliarcobacter butzleri (strain RM4018) (Arcobacter butzleri).